The chain runs to 256 residues: DNA repair protein RecO (256 aa).

Belongs to the RecO family.

Involved in DNA repair and RecF pathway recombination. This Streptococcus pneumoniae serotype 2 (strain D39 / NCTC 7466) protein is DNA repair protein RecO.